Reading from the N-terminus, the 111-residue chain is Cytochrome c 2.1 (111 aa).

Ser2 carries the post-translational modification N-acetylserine. Heme c contacts are provided by Cys20, Cys23, His24, and Met85.

This sequence belongs to the cytochrome c family. Binds 1 heme c group covalently per subunit.

It localises to the mitochondrion intermembrane space. Functionally, electron carrier protein. The oxidized form of the cytochrome c heme group can accept an electron from the heme group of the cytochrome c1 subunit of cytochrome reductase. Cytochrome c then transfers this electron to the cytochrome oxidase complex, the final protein carrier in the mitochondrial electron-transport chain. The sequence is that of Cytochrome c 2.1 (cyc-2.1) from Caenorhabditis elegans.